Here is a 271-residue protein sequence, read N- to C-terminus: GPN-loop GTPase 3 (271 aa).

13-18 contacts GTP; sequence GVGKST. The Gly-Pro-Asn (GPN)-loop; involved in dimer interface signature appears at 70-72; the sequence is GPN. 173–176 provides a ligand contact to GTP; it reads SKMD.

The protein belongs to the GPN-loop GTPase family. In terms of assembly, heterodimers with GPN1 or GPN2. Binds to RNA polymerase II (RNAPII).

Its function is as follows. Small GTPase required for proper nuclear import of RNA polymerase II and III (RNAPII and RNAPIII). May act at an RNAP assembly step prior to nuclear import. This chain is GPN-loop GTPase 3, found in Yarrowia lipolytica (strain CLIB 122 / E 150) (Yeast).